Consider the following 484-residue polypeptide: Zinc metalloproteinase/disintegrin PMMP-2 (484 aa).

An N-terminal signal peptide occupies residues 1-20; that stretch reads MIQVLLVTICLAVFPYQGSS. The propeptide occupies 21 to 190; the sequence is IILESGNVDD…KASQLNLTPL (170 aa). The Peptidase M12B domain maps to 197–395; it reads RYVKLAIVVD…YNPQCILNAP (199 aa). An N-linked (GlcNAc...) asparagine glycan is attached at Asn239. Cystine bridges form between Cys308–Cys390, Cys352–Cys374, and Cys354–Cys357. His333 contributes to the Zn(2+) binding site. Glu334 is an active-site residue. Positions 337 and 343 each coordinate Zn(2+). Residues 396–413 constitute a propeptide that is removed on maturation; the sequence is LRTDTVSTPVSGNEFLEA. One can recognise a Disintegrin domain in the interval 403 to 484; sequence TPVSGNEFLE…ADCPRNGLYG (82 aa). Disulfide bonds link Cys417–Cys432, Cys419–Cys427, Cys426–Cys449, Cys440–Cys446, Cys445–Cys470, and Cys458–Cys477. A Cell attachment site motif is present at residues 462–464; sequence RGD.

It belongs to the venom metalloproteinase (M12B) family. P-II subfamily. P-IIa sub-subfamily. Monomer. The cofactor is Zn(2+). As to expression, expressed by the venom gland.

The protein resides in the secreted. Functionally, impairs hemostasis in the envenomed animal. In terms of biological role, inhibits platelet aggregation induced by ADP, thrombin, platelet-activating factor and collagen. Acts by inhibiting fibrinogen interaction with platelet receptors GPIIb/GPIIIa (ITGA2B/ITGB3). The polypeptide is Zinc metalloproteinase/disintegrin PMMP-2 (Protobothrops mucrosquamatus (Taiwan habu)).